Consider the following 154-residue polypeptide: 17 kDa surface antigen (154 aa).

The first 19 residues, 1–19, serve as a signal peptide directing secretion; the sequence is MKLLSKIMIIALAASMLQA. Residue cysteine 20 is the site of N-palmitoyl cysteine attachment. Residue cysteine 20 is the site of S-diacylglycerol cysteine attachment.

This sequence belongs to the rickettsiale 17 kDa surface antigen family.

The protein localises to the cell outer membrane. The protein is 17 kDa surface antigen (omp) of Rickettsia australis.